We begin with the raw amino-acid sequence, 371 residues long: Probable diguanylate cyclase DgcC (371 aa).

5 consecutive transmembrane segments (helical) span residues 46–66 (AVGL…HPPP), 68–88 (WWWL…WQIA), 112–132 (WVGV…IMCL), 143–163 (FVAG…LTGI), and 171–191 (PLEW…FGWV). A GGDEF domain is found at 240–371 (RDATLLIIDI…AGRNRTEVAA (132 aa)). Mg(2+)-binding residues include aspartate 248 and isoleucine 249. Substrate contacts are provided by asparagine 256 and aspartate 265. Mg(2+) is bound at residue aspartate 291.

Requires Mg(2+) as cofactor.

The protein resides in the cell inner membrane. The enzyme catalyses 2 GTP = 3',3'-c-di-GMP + 2 diphosphate. It functions in the pathway purine metabolism; 3',5'-cyclic di-GMP biosynthesis. In terms of biological role, a probable diguanylate cyclase. The last member of a cascade of expressed proteins, its expression requires DgcM. DgcC production induces biosynthesis of cellulose in some E.coli isolates, but not in K12 strains. Cyclic-di-GMP is a second messenger which controls cell surface-associated traits in bacteria. The protein is Probable diguanylate cyclase DgcC of Escherichia coli (strain K12).